The chain runs to 335 residues: MKKKIFAGAVTLLSVAVLAACSNSEGKDIVTMKGNTITVNEFYDQVKNNGAAQQVLLQMAIKDIFEEKYGKDVKDKDVKDAFEKSKTAYGTAFAQVLAQNGLTEDAYKEQIRTNMLVEYAVKKAAEKELTDENYKSAFENYTPEVTAQIIKVDSEDKGKEVLEKAKAEGADFSQIAKENSTDAATKEKGGEIKFDSGSTDVPDAVKKAAFALEENGVSDLVTVPDSQYSASYYIVKLVKKSEKSSNWKDYKDKLKKIIIAQKEKDTSFIQSVVAKELKDANIKVKDSAFQSVFAQYIETTGSSTSSSSAASSSKTSESSSAAESSSKEASSSAAE.

An N-terminal signal peptide occupies residues 1–20 (MKKKIFAGAVTLLSVAVLAA). Residue Cys21 is the site of N-palmitoyl cysteine attachment. Cys21 is lipidated: S-diacylglycerol cysteine. The 98-residue stretch at 142–239 (TPEVTAQIIK…ASYYIVKLVK (98 aa)) folds into the PpiC domain. The interval 300-335 (TGSSTSSSSAASSSKTSESSSAAESSSKEASSSAAE) is disordered. Positions 302 to 335 (SSTSSSSAASSSKTSESSSAAESSSKEASSSAAE) are enriched in low complexity.

It belongs to the PrsA family.

The protein resides in the cell membrane. The catalysed reaction is [protein]-peptidylproline (omega=180) = [protein]-peptidylproline (omega=0). In terms of biological role, plays a major role in protein secretion by helping the post-translocational extracellular folding of several secreted proteins. In Streptococcus sanguinis (strain SK36), this protein is Foldase protein PrsA.